Reading from the N-terminus, the 147-residue chain is Myoglobin (147 aa).

The 140-residue stretch at 2 to 141 folds into the Globin domain; that stretch reads ADFDMVLKCW…IITDMEADYK (140 aa). Residue His60 participates in nitrite binding. His60 is an O2 binding site. His89 contributes to the heme b binding site.

This sequence belongs to the globin family. Monomeric.

The protein resides in the cytoplasm. Its subcellular location is the sarcoplasm. The catalysed reaction is Fe(III)-heme b-[protein] + nitric oxide + H2O = Fe(II)-heme b-[protein] + nitrite + 2 H(+). It catalyses the reaction H2O2 + AH2 = A + 2 H2O. In terms of biological role, monomeric heme protein which primary function is to store oxygen and facilitate its diffusion within muscle tissues. Reversibly binds oxygen through a pentacoordinated heme iron and enables its timely and efficient release as needed during periods of heightened demand. Depending on the oxidative conditions of tissues and cells, and in addition to its ability to bind oxygen, it also has a nitrite reductase activity whereby it regulates the production of bioactive nitric oxide. Under stress conditions, like hypoxia and anoxia, it also protects cells against reactive oxygen species thanks to its pseudoperoxidase activity. The polypeptide is Myoglobin (mb) (Channichthys rhinoceratus (Unicorn icefish)).